The following is a 146-amino-acid chain: Aminoglycoside N(6')-acetyltransferase type 1 (146 aa).

In terms of domain architecture, N-acetyltransferase spans 1–146; sequence MNIMPVSESL…RVVYFKKHIG (146 aa). Substrate-binding residues include tryptophan 22, histidine 25, tyrosine 66, and glutamate 79. Position 81 to 83 (81 to 83) interacts with acetyl-CoA; that stretch reads IYV. Aspartate 115 lines the substrate pocket. Asparagine 120 contacts acetyl-CoA. Residue glutamate 136 coordinates substrate.

Homodimer.

It carries out the reaction kanamycin B + acetyl-CoA = N(6')-acetylkanamycin B + CoA + H(+). Catalyzes the transfer of an acetyl group from acetyl-CoA to the 6'-amino group of aminoglycoside molecules conferring resistance to antibiotics containing the purpurosamine ring including amikacin, kanamycin, tobramycin and netilmicin. The sequence is that of Aminoglycoside N(6')-acetyltransferase type 1 from Acinetobacter genomosp. 13.